Here is a 573-residue protein sequence, read N- to C-terminus: Probable cytochrome c oxidase subunit 1 (573 aa).

Residues 40–60 form a helical membrane-spanning segment; that stretch reads IGIMYCVACISFFFIGGLLAL. Histidine 86 serves as a coordination point for Fe(II)-heme a. The next 6 helical transmembrane spans lie at 89–109, 121–141, 170–190, 213–233, 258–278, and 290–310; these read IMLL…VLPL, LNAF…AGFI, LWIM…VNMI, IMVT…ALFG, LFWF…FGIV, and IFGY…SVAV. Cu cation-binding residues include histidine 264 and tyrosine 268. A cross-link (1'-histidyl-3'-tyrosine (His-Tyr)) is located at residues 264–268; it reads HPEVY. Histidine 313 and histidine 314 together coordinate Cu cation. The next 2 helical transmembrane spans lie at 315–335 and 359–379; these read MFAT…LIAV and MLFS…GVLL. Histidine 397 is a binding site for heme a3. Helical transmembrane passes span 398–418, 433–453, and 476–496; these read FHYV…YFWF, LHFW…HWLG, and VSTI…WNVF. Histidine 399 contacts Fe(II)-heme a.

This sequence belongs to the heme-copper respiratory oxidase family.

The protein localises to the cell membrane. The enzyme catalyses 4 Fe(II)-[cytochrome c] + O2 + 8 H(+)(in) = 4 Fe(III)-[cytochrome c] + 2 H2O + 4 H(+)(out). Its pathway is energy metabolism; oxidative phosphorylation. Functionally, cytochrome c oxidase is the component of the respiratory chain that catalyzes the reduction of oxygen to water. Subunits 1-3 form the functional core of the enzyme complex. CO I is the catalytic subunit of the enzyme. Electrons originating in cytochrome c are transferred via the copper A center of subunit 2 and heme A of subunit 1 to the bimetallic center formed by heme A3 and copper B. The chain is Probable cytochrome c oxidase subunit 1 (ctaD) from Mycobacterium bovis (strain ATCC BAA-935 / AF2122/97).